Here is a 400-residue protein sequence, read N- to C-terminus: Na(+)/H(+) antiporter NhaA (400 aa).

12 consecutive transmembrane segments (helical) span residues Ala26–Leu46, Leu71–Val91, Ile107–Ile127, Gly137–Ser157, Ile166–Phe186, His189–Leu209, Phe212–Leu232, Lys233–Gly253, Phe273–Val293, Pro299–Phe319, Ile340–Leu360, and Leu373–Leu393.

It belongs to the NhaA Na(+)/H(+) (TC 2.A.33) antiporter family.

It localises to the cell inner membrane. It carries out the reaction Na(+)(in) + 2 H(+)(out) = Na(+)(out) + 2 H(+)(in). Its function is as follows. Na(+)/H(+) antiporter that extrudes sodium in exchange for external protons. The sequence is that of Na(+)/H(+) antiporter NhaA from Haemophilus influenzae (strain PittGG).